We begin with the raw amino-acid sequence, 172 residues long: Large ribosomal subunit protein uL10 (172 aa).

Belongs to the universal ribosomal protein uL10 family. In terms of assembly, part of the ribosomal stalk of the 50S ribosomal subunit. The N-terminus interacts with L11 and the large rRNA to form the base of the stalk. The C-terminus forms an elongated spine to which 3 L12 dimers bind in a sequential fashion forming a heptameric L10(L12)2(L12)2(L12)2 complex.

Its function is as follows. Forms part of the ribosomal stalk, playing a central role in the interaction of the ribosome with GTP-bound translation factors. The polypeptide is Large ribosomal subunit protein uL10 (Agrobacterium fabrum (strain C58 / ATCC 33970) (Agrobacterium tumefaciens (strain C58))).